The primary structure comprises 328 residues: tRNA uridine(34) hydroxylase (328 aa).

The region spanning 130 to 224 (LDEDTVVLDT…YGKDPEVQGE (95 aa)) is the Rhodanese domain. The active-site Cysteine persulfide intermediate is the cysteine 184.

The protein belongs to the TrhO family.

It carries out the reaction uridine(34) in tRNA + AH2 + O2 = 5-hydroxyuridine(34) in tRNA + A + H2O. Its function is as follows. Catalyzes oxygen-dependent 5-hydroxyuridine (ho5U) modification at position 34 in tRNAs. This Streptococcus pyogenes serotype M6 (strain ATCC BAA-946 / MGAS10394) protein is tRNA uridine(34) hydroxylase.